A 356-amino-acid polypeptide reads, in one-letter code: UDP-N-acetylglucosamine--N-acetylmuramyl-(pentapeptide) pyrophosphoryl-undecaprenol N-acetylglucosamine transferase (356 aa).

2 residues coordinate UDP-N-acetyl-alpha-D-glucosamine: S198 and Q289.

The protein belongs to the glycosyltransferase 28 family. MurG subfamily.

It is found in the cell membrane. The enzyme catalyses Mur2Ac(oyl-L-Ala-gamma-D-Glu-L-Lys-D-Ala-D-Ala)-di-trans,octa-cis-undecaprenyl diphosphate + UDP-N-acetyl-alpha-D-glucosamine = beta-D-GlcNAc-(1-&gt;4)-Mur2Ac(oyl-L-Ala-gamma-D-Glu-L-Lys-D-Ala-D-Ala)-di-trans,octa-cis-undecaprenyl diphosphate + UDP + H(+). It participates in cell wall biogenesis; peptidoglycan biosynthesis. Cell wall formation. Catalyzes the transfer of a GlcNAc subunit on undecaprenyl-pyrophosphoryl-MurNAc-pentapeptide (lipid intermediate I) to form undecaprenyl-pyrophosphoryl-MurNAc-(pentapeptide)GlcNAc (lipid intermediate II). The polypeptide is UDP-N-acetylglucosamine--N-acetylmuramyl-(pentapeptide) pyrophosphoryl-undecaprenol N-acetylglucosamine transferase (Streptococcus thermophilus (strain ATCC BAA-491 / LMD-9)).